A 248-amino-acid chain; its full sequence is NH(3)-dependent NAD(+) synthetase (248 aa).

31–38 is a binding site for ATP; sequence GLSGGVDS. D37 contributes to the Mg(2+) binding site. R114 serves as a coordination point for deamido-NAD(+). T134 provides a ligand contact to ATP. E139 contacts Mg(2+). 2 residues coordinate deamido-NAD(+): K147 and D154. K163 and T185 together coordinate ATP. A deamido-NAD(+)-binding site is contributed by 232 to 233; the sequence is HK.

It belongs to the NAD synthetase family. As to quaternary structure, homodimer.

The catalysed reaction is deamido-NAD(+) + NH4(+) + ATP = AMP + diphosphate + NAD(+) + H(+). It participates in cofactor biosynthesis; NAD(+) biosynthesis; NAD(+) from deamido-NAD(+) (ammonia route): step 1/1. Functionally, catalyzes the ATP-dependent amidation of deamido-NAD to form NAD. Uses ammonia as a nitrogen source. The protein is NH(3)-dependent NAD(+) synthetase of Mycoplasma pneumoniae (strain ATCC 29342 / M129 / Subtype 1) (Mycoplasmoides pneumoniae).